A 98-amino-acid chain; its full sequence is NADH-ubiquinone oxidoreductase chain 4L (98 aa).

Helical transmembrane passes span 1–21 (MASI…GVLI), 26–46 (LMST…MMTL), and 59–79 (APLI…ALLV).

This sequence belongs to the complex I subunit 4L family. In terms of assembly, core subunit of respiratory chain NADH dehydrogenase (Complex I) which is composed of 45 different subunits.

The protein localises to the mitochondrion inner membrane. It catalyses the reaction a ubiquinone + NADH + 5 H(+)(in) = a ubiquinol + NAD(+) + 4 H(+)(out). Its function is as follows. Core subunit of the mitochondrial membrane respiratory chain NADH dehydrogenase (Complex I) which catalyzes electron transfer from NADH through the respiratory chain, using ubiquinone as an electron acceptor. Part of the enzyme membrane arm which is embedded in the lipid bilayer and involved in proton translocation. This chain is NADH-ubiquinone oxidoreductase chain 4L (MT-ND4L), found in Caenolestes fuliginosus (Shrew opossum).